A 189-amino-acid polypeptide reads, in one-letter code: Casparian strip membrane protein 1 (189 aa).

The Cytoplasmic segment spans residues 1 to 25; that stretch reads MMQAESGSAEAKGPLPPPVGRKRRG. The chain crosses the membrane as a helical span at residues 26–46; that stretch reads LGILDFLLRLLAIGATLSAAI. Residues 47-73 lie on the Extracellular side of the membrane; that stretch reads TMGTTNETLQFFTQFFQFKARFYDLSA. An N-linked (GlcNAc...) asparagine glycan is attached at asparagine 52. Residues 74 to 94 form a helical membrane-spanning segment; that stretch reads FIYFVIANAIVGGYLLLSLPI. Residues 95–108 are Cytoplasmic-facing; that stretch reads SILNIVRPRAASSR. A helical transmembrane segment spans residues 109–129; sequence VFLIFFDTVMVAVCTSGAAAA. The Extracellular portion of the chain corresponds to 130–158; the sequence is VAILYVARKGNSRTNWFAICQRFNSFCNQ. A helical transmembrane segment spans residues 159–179; the sequence is AIGAVSASFAGVVFLILLVLL. Topologically, residues 180 to 189 are cytoplasmic; sequence SASTLYRRRP.

Belongs to the Casparian strip membrane proteins (CASP) family. As to quaternary structure, homodimer and heterodimers.

It localises to the cell membrane. In terms of biological role, regulates membrane-cell wall junctions and localized cell wall deposition. Required for establishment of the Casparian strip membrane domain (CSD) and the subsequent formation of Casparian strips, a cell wall modification of the root endodermis that determines an apoplastic barrier between the intraorganismal apoplasm and the extraorganismal apoplasm and prevents lateral diffusion. In Picea glauca (White spruce), this protein is Casparian strip membrane protein 1.